Here is a 136-residue protein sequence, read N- to C-terminus: MLSNPKRTRFRKQHRGRMKGVSYRGNHICFGRYALQALEPAWITSRQIEAGRRAMTRYARRGGRIWVRIFPDKPVTVRPTETRMGSGKGSPEYWVSVVKPGRILYEMGGVSETVARSAISIAASKMPIRTQFVIAG.

Belongs to the universal ribosomal protein uL16 family. As to quaternary structure, part of the 50S ribosomal subunit.

It localises to the plastid. The protein resides in the chloroplast. This Illicium oligandrum (Star anise) protein is Large ribosomal subunit protein uL16c.